We begin with the raw amino-acid sequence, 540 residues long: MKFWSRPLTFLIIIIYLIIQQVNSSPPSLSIPEHFLRCLDTQPSDHGSPNSRTAVIPTNSSFSTNLMNGVRNLRFASVSTRKPEVIVAAVTETHIRATISCCKLLNLELRIRSGGHDYEGFSYTSPVPFVILDMYNFNKIDINMKDETVWIQSGASLGQLYYNIASKSKVHAFPAGVCPKVGAGGHFSGGGFGNLMRKYGLSIDHIIDAQIMDANGKVYRNRQAMGEDVFWAIRGGGGGSYGVILAWKIKLVRVPEKVTVFKLERTVREGAVDLVHKWQQVAPVIDRDLFIRLEIKPINRKISKGKTIKVSFIGMFLGLPERLLNITKQSFPELHLTKEDCMVKKWIESSVFWANYPEKAPIELLLKRVSTNEYYWKRTSDFVQAPISKQGLAKIFQTMIDHSPLPRRVWMQWNPWGGKMAEIASDATAFVHRGGNVFMIEHFMNWYRPGDELEEKFLAIARSFKEAMAPFVSKNPREAFFNYRDVDIGITTPGYNATYEGAKVYGDSYFKGNYLRLVKIKARFDRTNFFRSQQGIPVLA.

Residues 1–24 (MKFWSRPLTFLIIIIYLIIQQVNS) form the signal peptide. A disulfide bridge connects residues Cys38 and Cys101. The N-linked (GlcNAc...) asparagine glycan is linked to Asn59. The FAD-binding PCMH-type domain maps to 79–254 (STRKPEVIVA…LAWKIKLVRV (176 aa)). A cross-link (6-(S-cysteinyl)-8alpha-(pros-histidyl)-FAD (His-Cys)) is located at residues 116–178 (HDYEGFSYTS…KVHAFPAGVC (63 aa)). Asn325 and Asn496 each carry an N-linked (GlcNAc...) asparagine glycan.

The protein belongs to the oxygen-dependent FAD-linked oxidoreductase family. Requires FAD as cofactor. In terms of processing, the FAD cofactor is bound via a bicovalent 6-S-cysteinyl, 8alpha-N1-histidyl FAD linkage.

Its subcellular location is the secreted. The protein localises to the cell wall. In Arabidopsis thaliana (Mouse-ear cress), this protein is Berberine bridge enzyme-like 16.